A 111-amino-acid chain; its full sequence is Propane 2-monooxygenase, effector component (111 aa).

The protein belongs to the TmoD/XamoD family. As to quaternary structure, the propane 2-monooxygenase multicomponent enzyme system is composed of an electron transfer component and a monooxygenase component interacting with the effector protein PrmD. The electron transfer component is composed of a reductase (PrmB), and the monooxygenase component is formed by a large subunit (PrmA) and a small subunit (PrmC).

In terms of biological role, effector component of the propane 2-monooxygenase multicomponent enzyme system which is involved in the degradation of propane via the O2-dependent hydroxylation of propane. The polypeptide is Propane 2-monooxygenase, effector component (Gordonia sp. (strain TY-5)).